The sequence spans 108 residues: Small cysteine and glycine repeat-containing protein 8 (108 aa).

The tract at residues 4 to 84 (CGCGGCGGGC…RRTCSSCGCG (81 aa)) is 12 X 2 AA repeats of CG.

This sequence belongs to the KRTAP type 28 family.

In terms of biological role, in the hair cortex, hair keratin intermediate filaments are embedded in an interfilamentous matrix, consisting of hair keratin-associated proteins (KRTAP), which are essential for the formation of a rigid and resistant hair shaft through their extensive disulfide bond cross-linking with abundant cysteine residues of hair keratins. The matrix proteins include the high-sulfur and high-glycine-tyrosine keratins. In Homo sapiens (Human), this protein is Small cysteine and glycine repeat-containing protein 8.